Consider the following 471-residue polypeptide: UDP-N-acetylmuramate--L-alanine ligase (471 aa).

125–131 (GTHGKTT) serves as a coordination point for ATP.

This sequence belongs to the MurCDEF family.

The protein resides in the cytoplasm. It catalyses the reaction UDP-N-acetyl-alpha-D-muramate + L-alanine + ATP = UDP-N-acetyl-alpha-D-muramoyl-L-alanine + ADP + phosphate + H(+). It participates in cell wall biogenesis; peptidoglycan biosynthesis. In terms of biological role, cell wall formation. This chain is UDP-N-acetylmuramate--L-alanine ligase, found in Kineococcus radiotolerans (strain ATCC BAA-149 / DSM 14245 / SRS30216).